The primary structure comprises 475 residues: ATP synthase subunit beta (475 aa).

Position 148-155 (148-155 (GGAGVGKT)) interacts with ATP.

The protein belongs to the ATPase alpha/beta chains family. In terms of assembly, F-type ATPases have 2 components, CF(1) - the catalytic core - and CF(0) - the membrane proton channel. CF(1) has five subunits: alpha(3), beta(3), gamma(1), delta(1), epsilon(1). CF(0) has three main subunits: a(1), b(2) and c(9-12). The alpha and beta chains form an alternating ring which encloses part of the gamma chain. CF(1) is attached to CF(0) by a central stalk formed by the gamma and epsilon chains, while a peripheral stalk is formed by the delta and b chains.

It is found in the cell inner membrane. The catalysed reaction is ATP + H2O + 4 H(+)(in) = ADP + phosphate + 5 H(+)(out). Its function is as follows. Produces ATP from ADP in the presence of a proton gradient across the membrane. The catalytic sites are hosted primarily by the beta subunits. This Psychrobacter sp. (strain PRwf-1) protein is ATP synthase subunit beta.